We begin with the raw amino-acid sequence, 224 residues long: 7-cyano-7-deazaguanine synthase (224 aa).

10–20 (VSGGLDSATVL) is an ATP binding site. Residues C189, C199, C202, and C205 each coordinate Zn(2+).

It belongs to the QueC family. It depends on Zn(2+) as a cofactor.

The catalysed reaction is 7-carboxy-7-deazaguanine + NH4(+) + ATP = 7-cyano-7-deazaguanine + ADP + phosphate + H2O + H(+). It participates in purine metabolism; 7-cyano-7-deazaguanine biosynthesis. In terms of biological role, catalyzes the ATP-dependent conversion of 7-carboxy-7-deazaguanine (CDG) to 7-cyano-7-deazaguanine (preQ(0)). This is 7-cyano-7-deazaguanine synthase from Nitrosococcus oceani (strain ATCC 19707 / BCRC 17464 / JCM 30415 / NCIMB 11848 / C-107).